A 228-amino-acid chain; its full sequence is Large ribosomal subunit protein mL64 (228 aa).

2 disordered regions span residues 20–44 (PRSR…DREN) and 186–228 (QRKR…KPSS). Positions 98-207 (TMQESLRVQQ…KKEARIAAMA (110 aa)) form a coiled coil. Residues 184–200 (KQQRKRLKEERQRQKKE) carry the Nuclear localization signal motif. Residues 186–202 (QRKRLKEERQRQKKEAR) show a composition bias toward basic and acidic residues. Residues 212–228 (QDSAEAQDSAASGKPSS) are compositionally biased toward low complexity.

Belongs to the mitochondrion-specific ribosomal protein mL64 family. Component of the mitochondrial ribosome large subunit (39S) which comprises a 16S rRNA and about 50 distinct proteins. Interacts with GADD45A, GADD45B and GADD45G. Interacts with NR4A1 via the NR4A1 AB domain. Interacts with ATAD3A and ATAD3B.

The protein resides in the mitochondrion. It localises to the nucleus. Its function is as follows. Acts as a negative regulator of G1 to S cell cycle phase progression by inhibiting cyclin-dependent kinases. Inhibitory effects are additive with GADD45 proteins but also occur in the absence of GADD45 proteins. Acts as a repressor of the orphan nuclear receptor NR4A1 by inhibiting AB domain-mediated transcriptional activity. May be involved in the hormone-mediated regulation of NR4A1 transcriptional activity. May play a role in mitochondrial protein synthesis. The chain is Large ribosomal subunit protein mL64 (Gadd45gip1) from Rattus norvegicus (Rat).